We begin with the raw amino-acid sequence, 455 residues long: MLDIKLIRENPELVKNDLIKRGELEKVKWVDEILKLDTEWRTKLKEINRLRHERNKIAVEIGKRRKKGEPVDELLAKSREIVKRIGELENEVEELKKKIDYYLWRLPNITHPSVPVGKDENDNVPIRFWGKARVWKGHLERFLEQSQGKMEYEILEWKPKLHVDLLEILGGADFARAAKVSGSRFYYLLNEIVILDLALIRFALDRLIEKGFTPVIPPYMVRRFVEEGSTSFEDFEDVIYKVEDEDLYLIPTAEHPLAGMHANEILDGKDLPLLYVGVSPCFRKEAGTAGKDTKGIFRVHQFHKVEQFVYSRPEESWEWHEKIIRNAEELFQELEIPYRVVNICTGDLGYVAAKKYDIEAWMPGQGKFREVVSASNCTDWQARRLNIRFRDRTDEKPRYVHTLNSTAIATSRAIVAILENHQEEDGTVRIPKVLWKYTGFKEIVPVEKKERCCAT.

252–254 (TAE) contributes to the L-serine binding site. ATP is bound by residues 283–285 (RKE) and valine 299. Glutamate 306 provides a ligand contact to L-serine. 370-373 (EVVS) is a binding site for ATP. Residue threonine 406 participates in L-serine binding.

Belongs to the class-II aminoacyl-tRNA synthetase family. Type-1 seryl-tRNA synthetase subfamily. In terms of assembly, homodimer. The tRNA molecule binds across the dimer.

The protein resides in the cytoplasm. It carries out the reaction tRNA(Ser) + L-serine + ATP = L-seryl-tRNA(Ser) + AMP + diphosphate + H(+). It catalyses the reaction tRNA(Sec) + L-serine + ATP = L-seryl-tRNA(Sec) + AMP + diphosphate + H(+). It participates in aminoacyl-tRNA biosynthesis; selenocysteinyl-tRNA(Sec) biosynthesis; L-seryl-tRNA(Sec) from L-serine and tRNA(Sec): step 1/1. In terms of biological role, catalyzes the attachment of serine to tRNA(Ser). Is also able to aminoacylate tRNA(Sec) with serine, to form the misacylated tRNA L-seryl-tRNA(Sec), which will be further converted into selenocysteinyl-tRNA(Sec). The sequence is that of Serine--tRNA ligase from Pyrococcus horikoshii (strain ATCC 700860 / DSM 12428 / JCM 9974 / NBRC 100139 / OT-3).